The following is a 329-amino-acid chain: DNA-directed RNA polymerase subunit alpha (329 aa).

The tract at residues Met-1–Glu-233 is alpha N-terminal domain (alpha-NTD). The alpha C-terminal domain (alpha-CTD) stretch occupies residues Thr-266 to Lys-329.

It belongs to the RNA polymerase alpha chain family. As to quaternary structure, in plastids the minimal PEP RNA polymerase catalytic core is composed of four subunits: alpha, beta, beta', and beta''. When a (nuclear-encoded) sigma factor is associated with the core the holoenzyme is formed, which can initiate transcription.

Its subcellular location is the plastid. The protein resides in the chloroplast. It carries out the reaction RNA(n) + a ribonucleoside 5'-triphosphate = RNA(n+1) + diphosphate. Functionally, DNA-dependent RNA polymerase catalyzes the transcription of DNA into RNA using the four ribonucleoside triphosphates as substrates. In Arabidopsis thaliana (Mouse-ear cress), this protein is DNA-directed RNA polymerase subunit alpha.